The sequence spans 208 residues: Uracil phosphoribosyltransferase (208 aa).

5-phospho-alpha-D-ribose 1-diphosphate contacts are provided by residues Arg-78, Arg-103, and 130–138 (DPMLATGGS). Uracil-binding positions include Ile-193 and 198–200 (GDA). Asp-199 lines the 5-phospho-alpha-D-ribose 1-diphosphate pocket.

This sequence belongs to the UPRTase family. Mg(2+) is required as a cofactor.

The enzyme catalyses UMP + diphosphate = 5-phospho-alpha-D-ribose 1-diphosphate + uracil. Its pathway is pyrimidine metabolism; UMP biosynthesis via salvage pathway; UMP from uracil: step 1/1. With respect to regulation, allosterically activated by GTP. Its function is as follows. Catalyzes the conversion of uracil and 5-phospho-alpha-D-ribose 1-diphosphate (PRPP) to UMP and diphosphate. In Glaesserella parasuis serovar 5 (strain SH0165) (Haemophilus parasuis), this protein is Uracil phosphoribosyltransferase.